The chain runs to 208 residues: Holliday junction resolvase RecU (208 aa).

The interval 1 to 25 (MNYPNGKPFNRNKTKVGRTNDHKSS) is disordered. 4 residues coordinate Mg(2+): T87, D89, E102, and Q121.

This sequence belongs to the RecU family. Requires Mg(2+) as cofactor.

It localises to the cytoplasm. The enzyme catalyses Endonucleolytic cleavage at a junction such as a reciprocal single-stranded crossover between two homologous DNA duplexes (Holliday junction).. Functionally, endonuclease that resolves Holliday junction intermediates in genetic recombination. Cleaves mobile four-strand junctions by introducing symmetrical nicks in paired strands. Promotes annealing of linear ssDNA with homologous dsDNA. Required for DNA repair, homologous recombination and chromosome segregation. The sequence is that of Holliday junction resolvase RecU from Staphylococcus carnosus (strain TM300).